The following is a 140-amino-acid chain: Nucleoside diphosphate kinase (140 aa).

ATP contacts are provided by Lys11, Phe59, Arg87, Thr93, Arg104, and Asn114. The Pros-phosphohistidine intermediate role is filled by His117.

The protein belongs to the NDK family. Homotetramer. The cofactor is Mg(2+).

It localises to the cytoplasm. It catalyses the reaction a 2'-deoxyribonucleoside 5'-diphosphate + ATP = a 2'-deoxyribonucleoside 5'-triphosphate + ADP. The enzyme catalyses a ribonucleoside 5'-diphosphate + ATP = a ribonucleoside 5'-triphosphate + ADP. Its function is as follows. Major role in the synthesis of nucleoside triphosphates other than ATP. The ATP gamma phosphate is transferred to the NDP beta phosphate via a ping-pong mechanism, using a phosphorylated active-site intermediate. The sequence is that of Nucleoside diphosphate kinase from Methylobacterium radiotolerans (strain ATCC 27329 / DSM 1819 / JCM 2831 / NBRC 15690 / NCIMB 10815 / 0-1).